A 105-amino-acid polypeptide reads, in one-letter code: Mitochondrial import inner membrane translocase subunit tim14 (105 aa).

Topologically, residues 1-3 (MAS) are mitochondrial intermembrane. Residues 4–23 (TFAIGLGVATAAFLGRAGYV) form a helical membrane-spanning segment. Residues 24 to 105 (ALRRYQGGIN…EAKEFLDKHI (82 aa)) are Mitochondrial matrix-facing. The region spanning 52–105 (EAALILELPERTLNKEKVRKKHRQLMLLNHPDRGGSPYLATKINEAKEFLDKHI) is the J domain.

Belongs to the TIM14 family. As to quaternary structure, heterodimer with PAM18/pamR. Component of the PAM complex, at least composed of mtHsp70, MGE1/mgeA, tim44, PAM16/pamP, PAM17/pamQ and PAM18/pamR.

Its subcellular location is the mitochondrion inner membrane. Functionally, essential component of the PAM complex, a complex required for the translocation of transit peptide-containing proteins from the inner membrane into the mitochondrial matrix in an ATP-dependent manner. In the complex, it is required to stimulate activity of mtHSP70 (SSC1/sscA). In Aspergillus fumigatus (strain ATCC MYA-4609 / CBS 101355 / FGSC A1100 / Af293) (Neosartorya fumigata), this protein is Mitochondrial import inner membrane translocase subunit tim14 (pam18).